Consider the following 305-residue polypeptide: tRNA uridine(34) hydroxylase (305 aa).

In terms of domain architecture, Rhodanese spans 125-219; the sequence is ADENTVVVDT…YLEEVPREQS (95 aa). Catalysis depends on C179, which acts as the Cysteine persulfide intermediate.

The protein belongs to the TrhO family.

It catalyses the reaction uridine(34) in tRNA + AH2 + O2 = 5-hydroxyuridine(34) in tRNA + A + H2O. In terms of biological role, catalyzes oxygen-dependent 5-hydroxyuridine (ho5U) modification at position 34 in tRNAs. The protein is tRNA uridine(34) hydroxylase of Brucella suis (strain ATCC 23445 / NCTC 10510).